Reading from the N-terminus, the 132-residue chain is Fluoride-specific ion channel FluC (132 aa).

Transmembrane regions (helical) follow at residues 5 to 25, 36 to 56, 68 to 88, and 103 to 123; these read LVAIGAGAALGANLRWLLGMW, GTLAANWLGAWLIGIAIALFA, FVVTGFLGALTTFSTFSAEMF, and IAVHVAGSLAMTGLGIATFGA. Gly75 and Thr78 together coordinate Na(+).

It belongs to the fluoride channel Fluc/FEX (TC 1.A.43) family.

It is found in the cell inner membrane. It carries out the reaction fluoride(in) = fluoride(out). With respect to regulation, na(+) is not transported, but it plays an essential structural role and its presence is essential for fluoride channel function. Its function is as follows. Fluoride-specific ion channel. Important for reducing fluoride concentration in the cell, thus reducing its toxicity. The sequence is that of Fluoride-specific ion channel FluC from Chromohalobacter salexigens (strain ATCC BAA-138 / DSM 3043 / CIP 106854 / NCIMB 13768 / 1H11).